The primary structure comprises 102 residues: Small ribosomal subunit protein uS14 (102 aa).

It belongs to the universal ribosomal protein uS14 family. As to quaternary structure, part of the 30S ribosomal subunit. Contacts proteins S3 and S10.

Functionally, binds 16S rRNA, required for the assembly of 30S particles and may also be responsible for determining the conformation of the 16S rRNA at the A site. This is Small ribosomal subunit protein uS14 from Ehrlichia ruminantium (strain Gardel).